The primary structure comprises 100 residues: MHFTQREQDKLMLVIAADLARRRQQRGLKLNYPEAVAIISFELLEGARDGKTVAELMSYGKQILGEDDVMEGVADMLTEMEIEATFPDGTKLITVHHPIV.

The protein belongs to the urease gamma subunit family. In terms of assembly, heterotrimer of UreA (gamma), UreB (beta) and UreC (alpha) subunits. Three heterotrimers associate to form the active enzyme.

It is found in the cytoplasm. It catalyses the reaction urea + 2 H2O + H(+) = hydrogencarbonate + 2 NH4(+). It participates in nitrogen metabolism; urea degradation; CO(2) and NH(3) from urea (urease route): step 1/1. In Staphylococcus xylosus, this protein is Urease subunit gamma.